A 258-amino-acid polypeptide reads, in one-letter code: Imidazole glycerol phosphate synthase subunit HisF (258 aa).

Catalysis depends on residues Asp-11 and Asp-130.

It belongs to the HisA/HisF family. Heterodimer of HisH and HisF.

It is found in the cytoplasm. The catalysed reaction is 5-[(5-phospho-1-deoxy-D-ribulos-1-ylimino)methylamino]-1-(5-phospho-beta-D-ribosyl)imidazole-4-carboxamide + L-glutamine = D-erythro-1-(imidazol-4-yl)glycerol 3-phosphate + 5-amino-1-(5-phospho-beta-D-ribosyl)imidazole-4-carboxamide + L-glutamate + H(+). It participates in amino-acid biosynthesis; L-histidine biosynthesis; L-histidine from 5-phospho-alpha-D-ribose 1-diphosphate: step 5/9. In terms of biological role, IGPS catalyzes the conversion of PRFAR and glutamine to IGP, AICAR and glutamate. The HisF subunit catalyzes the cyclization activity that produces IGP and AICAR from PRFAR using the ammonia provided by the HisH subunit. This chain is Imidazole glycerol phosphate synthase subunit HisF, found in Yersinia pseudotuberculosis serotype IB (strain PB1/+).